We begin with the raw amino-acid sequence, 261 residues long: Mite allergen Eur m 3 (261 aa).

The signal sequence occupies residues 1 to 18; sequence MVICNAIIVLLLAFNTLA. The propeptide occupies 19 to 29; the sequence is NPILPSSPNAT. In terms of domain architecture, Peptidase S1 spans 30–260; that stretch reads IVGGQKAKAG…FIDWIDSKRS (231 aa). C54 and C70 form a disulfide bridge. Active-site charge relay system residues include H69 and D114. 2 disulfide bridges follow: C181/C198 and C210/C236. S214 functions as the Charge relay system in the catalytic mechanism.

Belongs to the peptidase S1 family.

The protein localises to the secreted. The protein is Mite allergen Eur m 3 (EURM3) of Euroglyphus maynei (Mayne's house dust mite).